A 198-amino-acid chain; its full sequence is Twist-related protein 1 (198 aa).

Residues 1-18 (MMQDVSSSPVSPADDSLS) are compositionally biased toward low complexity. The interval 1 to 101 (MMQDVSSSPV…GGGSPQSYEE (101 aa)) is disordered. Basic residues predominate over residues 34–43 (RGGRKRRSSR). 2 stretches are compositionally biased toward gly residues: residues 46 to 64 (AGGG…GGDE) and 79 to 95 (GCGG…GGGS). The 52-residue stretch at 104–155 (TQRVMANVRERQRTQSLNEAFAALRKIIPTLPSDKLSKIQTLKLAARYIDFL) folds into the bHLH domain. The sufficient for transactivation activity stretch occupies residues 157–187 (QVLQSDELDSKMASCSYVAHERLSYAFSVWR).

Efficient DNA binding requires dimerization with another bHLH protein. Homodimer or heterodimer with E proteins such as TCF3. ID1 binds preferentially to TCF3 but does not interact efficiently with TWIST1 so ID1 levels control the amount of TCF3 available to dimerize with TWIST and thus determine the type of dimer formed.

It localises to the nucleus. Acts as a transcriptional regulator. Inhibits myogenesis by sequestrating E proteins, inhibiting trans-activation by MEF2, and inhibiting DNA-binding by MYOD1 through physical interaction. This interaction probably involves the basic domains of both proteins. Also represses expression of pro-inflammatory cytokines such as TNFA and IL1B. Regulates cranial suture patterning and fusion. Activates transcription as a heterodimer with E proteins. Regulates gene expression differentially, depending on dimer composition. Homodimers induce expression of FGFR2 and POSTN while heterodimers repress FGFR2 and POSTN expression and induce THBS1 expression. Heterodimerization is also required for osteoblast differentiation. Represses the activity of the circadian transcriptional activator: NPAS2-BMAL1 heterodimer. This chain is Twist-related protein 1 (TWIST1), found in Eulemur fulvus fulvus (Brown lemur).